We begin with the raw amino-acid sequence, 138 residues long: Basic leucine zipper 8 (138 aa).

The disordered stretch occupies residues 30–67 (NLPATSDDSSRTAEDNERKRRRKVSNRESARRSRMRKQ). The span at 37–47 (DSSRTAEDNER) shows a compositional bias: basic and acidic residues. The bZIP domain maps to 45–108 (NERKRRRKVS…EKVIEENMKL (64 aa)). A basic motif region spans residues 47-68 (RKRRRKVSNRESARRSRMRKQR). Residues 48-55 (KRRRKVSN) carry the Nuclear localization signal motif. The interval 73–87 (LWSMLVQLINKNKSL) is leucine-zipper.

The protein belongs to the bZIP family. In terms of assembly, homodimer.

It localises to the nucleus. The sequence is that of Basic leucine zipper 8 from Arabidopsis thaliana (Mouse-ear cress).